We begin with the raw amino-acid sequence, 344 residues long: Protease HtpX homolog (344 aa).

3 helical membrane passes run 8–28 (VALG…ATVA), 46–66 (ALTG…FVLV), and 74–94 (VSFL…TYVA). Residue H172 coordinates Zn(2+). The active site involves E173. H176 provides a ligand contact to Zn(2+). Transmembrane regions (helical) follow at residues 183-203 (AIML…VTAV) and 220-240 (LAVG…VLAF). Residue E245 participates in Zn(2+) binding.

The protein belongs to the peptidase M48B family. Zn(2+) serves as cofactor.

The protein resides in the cell membrane. The protein is Protease HtpX homolog of Pyrobaculum calidifontis (strain DSM 21063 / JCM 11548 / VA1).